A 322-amino-acid chain; its full sequence is Tubulin alpha-4 chain (322 aa).

The GTP site is built by S15, G19, T20, T54, N81, and N103. E129 is a catalytic residue.

Belongs to the tubulin family. As to quaternary structure, dimer of alpha and beta chains. A typical microtubule is a hollow water-filled tube with an outer diameter of 25 nm and an inner diameter of 15 nM. Alpha-beta heterodimers associate head-to-tail to form protofilaments running lengthwise along the microtubule wall with the beta-tubulin subunit facing the microtubule plus end conferring a structural polarity. Microtubules usually have 13 protofilaments but different protofilament numbers can be found in some organisms and specialized cells. The cofactor is Mg(2+). In terms of processing, some glutamate residues at the C-terminus are polyglycylated, resulting in polyglycine chains on the gamma-carboxyl group. Glycylation is mainly limited to tubulin incorporated into axonemes (cilia and flagella) whereas glutamylation is prevalent in neuronal cells, centrioles, axonemes, and the mitotic spindle. Both modifications can coexist on the same protein on adjacent residues, and lowering polyglycylation levels increases polyglutamylation, and reciprocally. The precise function of polyglycylation is still unclear. Post-translationally, some glutamate residues at the C-terminus are polyglutamylated, resulting in polyglutamate chains on the gamma-carboxyl group. Polyglutamylation plays a key role in microtubule severing by spastin (SPAST). SPAST preferentially recognizes and acts on microtubules decorated with short polyglutamate tails: severing activity by SPAST increases as the number of glutamates per tubulin rises from one to eight, but decreases beyond this glutamylation threshold.

Its subcellular location is the cytoplasm. It is found in the cytoskeleton. The enzyme catalyses GTP + H2O = GDP + phosphate + H(+). Tubulin is the major constituent of microtubules, a cylinder consisting of laterally associated linear protofilaments composed of alpha- and beta-tubulin heterodimers. Microtubules grow by the addition of GTP-tubulin dimers to the microtubule end, where a stabilizing cap forms. Below the cap, tubulin dimers are in GDP-bound state, owing to GTPase activity of alpha-tubulin. The protein is Tubulin alpha-4 chain of Gallus gallus (Chicken).